We begin with the raw amino-acid sequence, 434 residues long: UDP-N-acetylmuramate--L-alanine ligase (434 aa).

ATP is bound at residue 108–114 (GSHGKTT).

The protein belongs to the MurCDEF family.

It localises to the cytoplasm. It catalyses the reaction UDP-N-acetyl-alpha-D-muramate + L-alanine + ATP = UDP-N-acetyl-alpha-D-muramoyl-L-alanine + ADP + phosphate + H(+). It participates in cell wall biogenesis; peptidoglycan biosynthesis. Its function is as follows. Cell wall formation. The chain is UDP-N-acetylmuramate--L-alanine ligase from Geobacillus thermodenitrificans (strain NG80-2).